Here is a 289-residue protein sequence, read N- to C-terminus: Diaminopimelate epimerase (289 aa).

Positions 13, 52, and 72 each coordinate substrate. The active-site Proton donor is Cys-81. Substrate is bound by residues 82-83 (GN), Asn-167, Asn-201, and 219-220 (ER). Residue Cys-228 is the Proton acceptor of the active site. Position 229-230 (229-230 (GT)) interacts with substrate.

It belongs to the diaminopimelate epimerase family. As to quaternary structure, homodimer.

The protein localises to the cytoplasm. It catalyses the reaction (2S,6S)-2,6-diaminopimelate = meso-2,6-diaminopimelate. It functions in the pathway amino-acid biosynthesis; L-lysine biosynthesis via DAP pathway; DL-2,6-diaminopimelate from LL-2,6-diaminopimelate: step 1/1. Catalyzes the stereoinversion of LL-2,6-diaminopimelate (L,L-DAP) to meso-diaminopimelate (meso-DAP), a precursor of L-lysine and an essential component of the bacterial peptidoglycan. This is Diaminopimelate epimerase from Caulobacter sp. (strain K31).